A 671-amino-acid chain; its full sequence is DNA ligase (671 aa).

NAD(+) is bound by residues 32–36, 81–82, and glutamate 113; these read DAEYD and SL. Catalysis depends on lysine 115, which acts as the N6-AMP-lysine intermediate. NAD(+) contacts are provided by arginine 136, glutamate 173, lysine 290, and lysine 314. Cysteine 408, cysteine 411, cysteine 426, and cysteine 432 together coordinate Zn(2+). Residues 593–671 form the BRCT domain; that stretch reads EIDSPFAGKT…EAEMIRLLGA (79 aa).

Belongs to the NAD-dependent DNA ligase family. LigA subfamily. Requires Mg(2+) as cofactor. Mn(2+) serves as cofactor.

It carries out the reaction NAD(+) + (deoxyribonucleotide)n-3'-hydroxyl + 5'-phospho-(deoxyribonucleotide)m = (deoxyribonucleotide)n+m + AMP + beta-nicotinamide D-nucleotide.. In terms of biological role, DNA ligase that catalyzes the formation of phosphodiester linkages between 5'-phosphoryl and 3'-hydroxyl groups in double-stranded DNA using NAD as a coenzyme and as the energy source for the reaction. It is essential for DNA replication and repair of damaged DNA. This Salmonella dublin (strain CT_02021853) protein is DNA ligase.